Here is an 839-residue protein sequence, read N- to C-terminus: Heat shock 70 kDa protein 4L (839 aa).

Phosphoserine is present on residues serine 74 and serine 508. Over residues 503–554 (LEGDHSDAPMETETSFKNENKDNMDKMQVDQEEGHQKCHAEHTPEEEIDHTG) the composition is skewed to basic and acidic residues. The tract at residues 503 to 567 (LEGDHSDAPM…KSAVSDKQDR (65 aa)) is disordered. Residue threonine 545 is modified to Phosphothreonine. Serine 579 bears the Phosphoserine mark. A Phosphothreonine modification is found at threonine 761. The disordered stretch occupies residues 786–839 (IYKPKPKAEVPEDKPKANSEHNGPMDGQSGTETKSDSTKDSSQHTKSSGEMEVD). Basic and acidic residues-rich tracts occupy residues 791-804 (PKAE…KANS) and 818-839 (TKSD…MEVD).

It belongs to the heat shock protein 70 family. Homodimer.

The protein resides in the cytoplasm. It is found in the nucleus. Possesses chaperone activity in vitro where it inhibits aggregation of citrate synthase. The sequence is that of Heat shock 70 kDa protein 4L (HSPA4L) from Homo sapiens (Human).